Consider the following 353-residue polypeptide: MKIADIKAFLGRYFDPVELVGTGDIEIVGPAKIEEASTGHVSFVANEKYYRYIAQTGASLVIVSQKAPLDDASPGTSFLKVADPYTAFVFILQHFSGKRRIADTGIAASASVAASVRLGENVSLGEHVVIGENCVIGDGTVIGPGTVLMDGVTVGSGCTIFPLVTIYDGTVIGDRVTIHSGTVVGADGFGFAPQKDGSYIKIPQMGTVEIGDDVEIGANTTIDRATMGATVIEKGAKIDNLVQIAHNCRIGGDTVIASQAGISGSVKIGRQCLIGGQAGFAGHLELADRTSVAAKAGISKSFLEPGLAIRGVPAQPMRDQLRQEAQVRGLGEMKSKLEALEAKLLALQQQLGE.

His-246 functions as the Proton acceptor in the catalytic mechanism.

Belongs to the transferase hexapeptide repeat family. LpxD subfamily. As to quaternary structure, homotrimer.

The catalysed reaction is a UDP-3-O-[(3R)-3-hydroxyacyl]-alpha-D-glucosamine + a (3R)-hydroxyacyl-[ACP] = a UDP-2-N,3-O-bis[(3R)-3-hydroxyacyl]-alpha-D-glucosamine + holo-[ACP] + H(+). It participates in bacterial outer membrane biogenesis; LPS lipid A biosynthesis. Catalyzes the N-acylation of UDP-3-O-acylglucosamine using 3-hydroxyacyl-ACP as the acyl donor. Is involved in the biosynthesis of lipid A, a phosphorylated glycolipid that anchors the lipopolysaccharide to the outer membrane of the cell. The sequence is that of UDP-3-O-acylglucosamine N-acyltransferase from Chlorobaculum tepidum (strain ATCC 49652 / DSM 12025 / NBRC 103806 / TLS) (Chlorobium tepidum).